The chain runs to 289 residues: Aquaporin PIP1-2 (289 aa).

Residues 1 to 36 (MEGKEEDVRLGANKFSERQPIGTAAQGAADDKDYKE) form a disordered region. The next 2 helical transmembrane spans lie at 58 to 78 (IAEFVATFLFLYITILTVMGV) and 93 to 115 (IAWSFGGMIFALVYCTAGISGGH). Positions 117–119 (NPA) match the NPA 1 motif. 3 helical membrane passes run 136–156 (LFYIIMQCLGAVCGAGVVKGF), 178–198 (GDGLGAEIVGTFILVYTVFSA), and 212–232 (ILAPLPIGFAVFLVHLATIPI). Positions 238 to 240 (NPA) match the NPA 2 motif. A helical membrane pass occupies residues 260–280 (IFWVGPFIGAALAAIYHQVII).

It belongs to the MIP/aquaporin (TC 1.A.8) family. PIP (TC 1.A.8.11) subfamily. In terms of assembly, interacts with PIP2-1 to form heteromers. As to expression, highly expressed in developing tassels and at lower levels in roots, shoots, ears and embryos. Expressed in the root growing zone at 5-6 mm from the root tip. Expressed in xylem parenchyma.

Its subcellular location is the cell membrane. Water channel required to facilitate the transport of water across cell membrane. Active as heteromers with PIP1-1, PIP2-1, PIP2-4 or PIP2-5, but not as homomers. The sequence is that of Aquaporin PIP1-2 (PIP1-2) from Zea mays (Maize).